The sequence spans 281 residues: Phosphonates import ATP-binding protein PhnC 2 (281 aa).

The ABC transporter domain maps to 4–238; the sequence is LTVDNVTKTY…LVDDLYGNVE (235 aa). 35–42 provides a ligand contact to ATP; sequence GESGAGKS. The segment at 243–281 is disordered; that stretch reads ATDNSDNSTVDTSDGTRYDTETGSDGTDEVDVIGRQVES. The span at 244-255 shows a compositional bias: low complexity; that stretch reads TDNSDNSTVDTS.

Belongs to the ABC transporter superfamily. Phosphonates importer (TC 3.A.1.9.1) family. In terms of assembly, the complex is composed of two ATP-binding proteins (PhnC), two transmembrane proteins (PhnE) and a solute-binding protein (PhnD).

Its subcellular location is the cell membrane. The catalysed reaction is phosphonate(out) + ATP + H2O = phosphonate(in) + ADP + phosphate + H(+). Its function is as follows. Part of the ABC transporter complex PhnCDE involved in phosphonates import. Responsible for energy coupling to the transport system. The sequence is that of Phosphonates import ATP-binding protein PhnC 2 from Haloquadratum walsbyi (strain DSM 16790 / HBSQ001).